Reading from the N-terminus, the 341-residue chain is Major histocompatibility complex class I-related protein 1 (341 aa).

Residues 1 to 22 (MGELMAFLLPLIIVLMVKHSDS) form the signal peptide. Residues 23 to 109 (RTHSLRYFRL…KRLQRHYNHS (87 aa)) are alpha-1. An antigen-binding cleft region spans residues 23-201 (RTHSLRYFRL…EYGKDTLQRT (179 aa)). Topologically, residues 23–302 (RTHSLRYFRL…QESETIPLVM (280 aa)) are extracellular. Positions 31, 46, and 65 each coordinate 5-(2-oxoethylideneamino)-6-(D-ribitylamino)uracil. 5-(2-oxopropylideneamino)-6-(D-ribitylamino)uracil is bound by residues Arg31, Ser46, and Lys65. Residues Arg31, Ser46, and Lys65 each contribute to the 7-hydroxy-6-methyl-8-(1-D-ribityl)lumazine site. Residue Arg31 participates in 8-(9H-purin-6-yl)-2-oxa-8-azabicyclo[3.3.1]nona-3,6-diene-4,6-dicarbaldehyde binding. 8-(9H-purin-6-yl)-2-oxa-8-azabicyclo[3.3.1]nona-3,6-diene-4,6-dicarbaldehyde contacts are provided by Lys65 and His80. Lys65 lines the 2-amino-4-oxopteridine-6-carbaldehyde pocket. Residue Lys65 coordinates pyridoxal. N-linked (GlcNAc...) asparagine glycosylation occurs at Asn107. The tract at residues 110 to 201 (GSHTYQRMIG…EYGKDTLQRT (92 aa)) is alpha-2. Arg116, Tyr174, and Gln175 together coordinate 5-(2-oxoethylideneamino)-6-(D-ribitylamino)uracil. Residues Arg116, Tyr174, and Gln175 each contribute to the 5-(2-oxopropylideneamino)-6-(D-ribitylamino)uracil site. 7-hydroxy-6-methyl-8-(1-D-ribityl)lumazine-binding residues include Arg116, Tyr174, and Gln175. Residue Arg116 coordinates 8-(9H-purin-6-yl)-2-oxa-8-azabicyclo[3.3.1]nona-3,6-diene-4,6-dicarbaldehyde. 2 cysteine pairs are disulfide-bonded: Cys120/Cys183 and Cys222/Cys278. The segment at 202–293 (EPPLVRVNRK…GVHMVLQVPQ (92 aa)) is alpha-3. Residues 203–299 (PPLVRVNRKE…QVPQESETIP (97 aa)) form the Ig-like C1-type domain. The connecting peptide stretch occupies residues 294–302 (ESETIPLVM). The chain crosses the membrane as a helical span at residues 303–323 (KAVSGSIVLVIVLAGVGVLVW). The Cytoplasmic segment spans residues 324-341 (RRRPREQNGAIYLPTPDR).

It belongs to the MHC class I family. As to quaternary structure, heterotrimer that consists of MR1, B2M and a metabolite antigen. Major classes of metabolite ligands presented by MR1 include riboflavin-related antigens, pyrimidines and ribityl lumazines, nucleobase adducts and folate derivatives. Forms reversible covalent Schiff base complexes with microbial pyrimidine-based metabolite, which serves as a molecular switch triggering complete folding, stable association with B2M and translocation of the ternary complex from endoplasmic reticulum to the plasma membrane. Alternatively, forms non-Schiff base complexes with ribityl lumazines. On antigen-presenting cells, the ternary complex interacts with TCR on MR1-restricted T cells, predominantly represented by CD8-positive and CD4- and CD8-double negative MAIT cell subsets. Interacts with TAPBP and TAPBPL chaperones in the endoplasmic reticulum. TAPBP associated or not with MHC class I peptide loading complex binds ligand-free MR1 or MR1-B2M complex, providing for stable MR1 pools ready for metabolite antigen processing. TAPBPL interacts with MR1 in a ligand-independent way; this interaction may stabilize MR1 pool and facilitate ligand loading and dissociation. MR1-B2M heterodimer adopts a topology similar to classical MHC class I molecules, with alpha-1 and alpha-2 domains of MR1 forming the antigen-binding cleft composed of two alpha-helices resting on a floor of 7-stranded anti-parallel beta-pleated sheet. The ribityl moiety of pyrimidine-based antigens is recognized by Tyr-95 residue in the CDR3 alpha loop of the invariant TRAV1-2 TCR. In terms of assembly, homodimerizes and does not associate with B2M. N-glycosylated. As to expression, ubiquitous. Low expression is detected in peripheral blood B cells, T cells, monocytes and in bronchial epithelial cells (at protein level). Expressed in plasmablasts or plasma B cells in the lamina propria of ileum, appendix and colon (at protein level). Highly expressed on a subset of CD45-positive CD3-positive thymocytes (at protein level).

The protein resides in the cell membrane. It is found in the endoplasmic reticulum membrane. Its subcellular location is the golgi apparatus membrane. It localises to the early endosome membrane. The protein localises to the late endosome membrane. The protein resides in the secreted. Its activity is regulated as follows. Inhibited by pterin-based metabolites such as 6-formylpterin (6-FP, a product of folic acid photodegradation). 6-FP competitively inhibits MAIT cell activation by 5-OP-RU. Modulated by commonly prescribed anti-inflammatory drug metabolites. Inhibited by salicilates such as 3-formylsalicylic and 5-formylsalicylic acids. Activated by diclofenac and/or its hydroxy metabolites. In terms of biological role, antigen-presenting molecule specialized in displaying microbial pyrimidine-based metabolites to alpha-beta T cell receptors (TCR) on innate-type mucosal-associated invariant T (MAIT) cells. In complex with B2M preferentially presents riboflavin-derived metabolites to semi-invariant TRAV1.2 TCRs on MAIT cells, guiding immune surveillance of the microbial metabolome at mucosal epithelial barriers. Signature pyrimidine-based microbial antigens are generated via non-enzymatic condensation of metabolite intermediates of the riboflavin pathway with by-products arising from other metabolic pathways such as glycolysis. Typical potent antigenic metabolites are 5-(2-oxoethylideneamino)-6-D-ribitylaminouracil (5-OE-RU) and 5-(2-oxopropylideneamino)-6-D-ribitylaminouracil (5-OP-RU), products of condensation of 5-amino-6-D-ribityaminouracil (5-A-RU) with glyoxal or methylglyoxal by-products, respectively. May present microbial antigens to various TRAV1-2-negative MAIT cell subsets, providing for unique recognition of diverse microbes, including pathogens that do not synthesize riboflavin. Upon antigen recognition, elicits rapid innate-type MAIT cell activation to eliminate pathogenic microbes by directly killing infected cells. During T cell development, drives thymic selection and post-thymic terminal differentiation of MAIT cells in a process dependent on commensal microflora. Acts as an immune sensor of cancer cell metabolome. May present a tumor-specific or -associated metabolite essential for cancer cell survival to a 'pan-cancer' TCR consisting of TRAV38.2-DV8*TRAJ31 alpha chain paired with a TRBV25.1*TRBJ2.3 beta chain on a non-MAIT CD8-positive T cell clone (MC.7.G5), triggering T cell-mediated killing of a wide range of cancer cell types. Allele MR1*01: Presents microbial-derived metabolite 5-OP-RU to semi-invariant TRAV1.2-TRAJ33-TRBV6.1 (A-F7) TCR on MAIT cells. Presents nucleobase carbonyl adducts generated during oxidative stress. Captures M3Ade, a nucleobase adduct composed of one adenine modified by a malondialdehyde trimer, for recognition by MR1-restricted T cell clones expressing a polyclonal TCR repertoire. Displays moderate binding affinity toward tumor-enriched pyridoxal and pyridoxal 5'-phosphate antigens. Its function is as follows. Allele MR1*04: Presents tumor-enriched metabolite pyridoxal to pan-cancer 7.G5 TCR on T cells enabling preferential recognition of cancer cells. May act as an alloantigen. This is Major histocompatibility complex class I-related protein 1 from Homo sapiens (Human).